Consider the following 282-residue polypeptide: B3 domain-containing protein At5g25475 (282 aa).

Residues 20-114 (WKSLSPGQTW…NLEVQIFKNN (95 aa)) constitute a DNA-binding region (TF-B3). Positions 127–178 (PETEPFHPTPKKPHKETTPASSFASGSGCSANGGTNGRGKQRSSDVKNPERY) are disordered. Residues 144-159 (TPASSFASGSGCSANG) are compositionally biased toward low complexity.

Its subcellular location is the nucleus. This Arabidopsis thaliana (Mouse-ear cress) protein is B3 domain-containing protein At5g25475.